Here is a 634-residue protein sequence, read N- to C-terminus: 1-deoxy-D-xylulose-5-phosphate synthase (634 aa).

Residues His74 and 115-117 (AHS) contribute to the thiamine diphosphate site. Asp146 serves as a coordination point for Mg(2+). Thiamine diphosphate is bound by residues 147–148 (GA), Asn176, Tyr283, and Glu365. Asn176 serves as a coordination point for Mg(2+).

This sequence belongs to the transketolase family. DXPS subfamily. As to quaternary structure, homodimer. Mg(2+) is required as a cofactor. Thiamine diphosphate serves as cofactor.

The enzyme catalyses D-glyceraldehyde 3-phosphate + pyruvate + H(+) = 1-deoxy-D-xylulose 5-phosphate + CO2. It functions in the pathway metabolic intermediate biosynthesis; 1-deoxy-D-xylulose 5-phosphate biosynthesis; 1-deoxy-D-xylulose 5-phosphate from D-glyceraldehyde 3-phosphate and pyruvate: step 1/1. Its function is as follows. Catalyzes the acyloin condensation reaction between C atoms 2 and 3 of pyruvate and glyceraldehyde 3-phosphate to yield 1-deoxy-D-xylulose-5-phosphate (DXP). The chain is 1-deoxy-D-xylulose-5-phosphate synthase from Burkholderia ambifaria (strain MC40-6).